Consider the following 991-residue polypeptide: Bone morphogenetic protein 1 (991 aa).

The N-terminal stretch at 1-25 (MPGVARPPLPLLSLPLLLLLLLLPR) is a signal peptide. The propeptide occupies 26 to 125 (AGRPLDLADY…RWRGRPRSRR (100 aa)). Positions 86-131 (ARRPSIKAAGNSSALGGQGTSGQPQRESRGRWRGRPRSRRAATSRP) are disordered. Positions 95-110 (GNSSALGGQGTSGQPQ) are enriched in polar residues. N96 carries N-linked (GlcNAc...) asparagine glycosylation. The span at 116-127 (RWRGRPRSRRAA) shows a compositional bias: basic residues. One can recognise a Peptidase M12A domain in the interval 126–325 (AATSRPERVW…AQARKLYKCP (200 aa)). An N-linked (GlcNAc...) asparagine glycan is attached at N147. 4 disulfide bridges follow: C168–C324, C188–C210, C190–C191, and C327–C353. Residue H218 coordinates Zn(2+). Residue E219 is part of the active site. Zn(2+)-binding residues include H222 and H228. 2 consecutive CUB domains span residues 327–439 (CGET…YEAI) and 440–551 (CGGD…NFFK). N337 and N368 each carry an N-linked (GlcNAc...) asparagine glycan. 15 disulfides stabilise this stretch: C380-C402, C440-C466, C493-C515, C556-C568, C564-C577, C579-C592, C596-C622, C649-C671, C712-C723, C719-C732, C734-C747, C752-C778, C805-C827, C865-C895, and C922-C944. Residues 552 to 593 (EVDECSRPNRGGCEQRCLNTLGSYKCSCDPGYELAPDKRRCE) form the EGF-like 1; calcium-binding domain. The region spanning 596 to 707 (CGGFLTKLNG…KKGFKAHFFS (112 aa)) is the CUB 3 domain. N604 is a glycosylation site (N-linked (GlcNAc...) asparagine). One can recognise an EGF-like 2; calcium-binding domain in the interval 708–748 (DKDECSKDNGGCQQDCVNTFGSYECQCRSGFVLHDNKHDCK). 2 consecutive CUB domains span residues 752-864 (CEHK…HSTE) and 865-981 (CGGQ…YTST). An omega-N-methylarginine mark is found at R939 and R942.

As to quaternary structure, interacts with POSTN, the interaction promotes deposition on the extracellular matrix. Requires Zn(2+) as cofactor. At high levels in embryonic maternal deciduum and floor plate region of the neural tube. Less in developing membranous and endochondral bone, submucosa of intestine, dermis of skin and the mesenchyme of spleen and lung.

The protein resides in the golgi apparatus. It is found in the trans-Golgi network. The protein localises to the secreted. It localises to the extracellular space. Its subcellular location is the extracellular matrix. The catalysed reaction is Cleavage of the C-terminal propeptide at Ala-|-Asp in type I and II procollagens and at Arg-|-Asp in type III.. Its activity is regulated as follows. Activity is increased by the procollagen C-endopeptidase enhancer protein. Its function is as follows. Metalloprotease that plays key roles in regulating the formation of the extracellular matrix (ECM) via processing of various precursor proteins into mature functional enzymes or structural proteins. Thereby participates in several developmental and physiological processes such as cartilage and bone formation, muscle growth and homeostasis, wound healing and tissue repair. Roles in ECM formation include cleavage of the C-terminal propeptides from procollagens such as procollagen I, II and III or the proteolytic activation of the enzyme lysyl oxidase LOX, necessary to formation of covalent cross-links in collagen and elastic fibers. Additional substrates include matricellular thrombospondin-1/THBS1 whose cleavage leads to cell adhesion disruption and TGF-beta activation. This chain is Bone morphogenetic protein 1 (Bmp1), found in Mus musculus (Mouse).